The sequence spans 201 residues: Large ribosomal subunit protein uL18 (201 aa).

This sequence belongs to the universal ribosomal protein uL18 family. Part of the 50S ribosomal subunit. Contacts the 5S and 23S rRNAs.

Its function is as follows. This is one of the proteins that bind and probably mediate the attachment of the 5S RNA into the large ribosomal subunit, where it forms part of the central protuberance. The protein is Large ribosomal subunit protein uL18 of Thermococcus onnurineus (strain NA1).